The following is a 101-amino-acid chain: Urease subunit beta (101 aa).

The protein belongs to the urease beta subunit family. As to quaternary structure, heterotrimer of UreA (gamma), UreB (beta) and UreC (alpha) subunits. Three heterotrimers associate to form the active enzyme.

The protein resides in the cytoplasm. The enzyme catalyses urea + 2 H2O + H(+) = hydrogencarbonate + 2 NH4(+). Its pathway is nitrogen metabolism; urea degradation; CO(2) and NH(3) from urea (urease route): step 1/1. The polypeptide is Urease subunit beta (Roseobacter denitrificans (strain ATCC 33942 / OCh 114) (Erythrobacter sp. (strain OCh 114))).